The primary structure comprises 236 residues: 3-oxoacyl-[acyl-carrier-protein] reductase (236 aa).

Met-1 is modified (N-acetylmethionine). Residues 11 to 14 and 34 to 35 each bind NADP(+); these read SRGI and RN. Lys-40 carries the post-translational modification N6-acetyllysine. Residues Asp-56 and 83-85 each bind NADP(+); that span reads AAG. Lys-96 carries the N6-acetyllysine modification. Residue Ser-134 coordinates substrate. Residues Tyr-147, Lys-151, and 180–182 each bind NADP(+); that span reads IRT. Tyr-147 functions as the Proton acceptor in the catalytic mechanism. Lys-194 bears the N6-acetyllysine mark.

Belongs to the short-chain dehydrogenases/reductases (SDR) family. In terms of assembly, homotetramer (in vitro). Heterotetramer with HSD17B8; contains two molecules each of HSD17B8 and CBR4. Does not form homotetramers when HSD17B8 is coexpressed, only heterotetramers (in vitro).

Its subcellular location is the mitochondrion matrix. The catalysed reaction is a (3R)-hydroxyacyl-[ACP] + NADP(+) = a 3-oxoacyl-[ACP] + NADPH + H(+). The enzyme catalyses a quinone + NADPH + H(+) = a quinol + NADP(+). It functions in the pathway lipid metabolism; fatty acid biosynthesis. In terms of biological role, component of the heterotetramer complex KAR (3-ketoacyl-[acyl carrier protein] reductase or 3-ketoacyl-[ACP] reductase) that forms part of the mitochondrial fatty acid synthase (mtFAS). Beta-subunit of the KAR heterotetramer complex, responsible for the 3-ketoacyl-ACP reductase activity of the mtFAS, reduces 3-oxoacyl-[ACP] to (3R)-hydroxyacyl-[ACP] in a NADPH-dependent manner with no chain length preference, thereby participating in mitochondrial fatty acid biosynthesis. The homotetramer has NADPH-dependent quinone reductase activity (in vitro), hence could play a role in protection against cytotoxicity of exogenous quinones. As a heterotetramer, it can also reduce 9,10-phenanthrenequinone, 1,4-benzoquinone and various other o-quinones and p-quinones (in vitro). In Mus musculus (Mouse), this protein is 3-oxoacyl-[acyl-carrier-protein] reductase (Cbr4).